Reading from the N-terminus, the 81-residue chain is Photosystem I iron-sulfur center (81 aa).

2 4Fe-4S ferredoxin-type domains span residues 2 to 31 (AHIVKIYDTCIGCTQCVRACPLDVLEMVPW) and 39 to 68 (MASAPRTEDCVGCKRCETACPTDFLSVRVY). Cys-11, Cys-14, Cys-17, Cys-21, Cys-48, Cys-51, Cys-54, and Cys-58 together coordinate [4Fe-4S] cluster.

As to quaternary structure, the eukaryotic PSI reaction center is composed of at least 11 subunits. Requires [4Fe-4S] cluster as cofactor.

The protein localises to the plastid. It localises to the chloroplast thylakoid membrane. It catalyses the reaction reduced [plastocyanin] + hnu + oxidized [2Fe-2S]-[ferredoxin] = oxidized [plastocyanin] + reduced [2Fe-2S]-[ferredoxin]. Apoprotein for the two 4Fe-4S centers FA and FB of photosystem I (PSI); essential for photochemical activity. FB is the terminal electron acceptor of PSI, donating electrons to ferredoxin. The C-terminus interacts with PsaA/B/D and helps assemble the protein into the PSI complex. Required for binding of PsaD and PsaE to PSI. PSI is a plastocyanin/cytochrome c6-ferredoxin oxidoreductase, converting photonic excitation into a charge separation, which transfers an electron from the donor P700 chlorophyll pair to the spectroscopically characterized acceptors A0, A1, FX, FA and FB in turn. The polypeptide is Photosystem I iron-sulfur center (Chlamydomonas reinhardtii (Chlamydomonas smithii)).